We begin with the raw amino-acid sequence, 110 residues long: Large ribosomal subunit protein uL22 (110 aa).

The protein belongs to the universal ribosomal protein uL22 family. Part of the 50S ribosomal subunit.

In terms of biological role, this protein binds specifically to 23S rRNA; its binding is stimulated by other ribosomal proteins, e.g. L4, L17, and L20. It is important during the early stages of 50S assembly. It makes multiple contacts with different domains of the 23S rRNA in the assembled 50S subunit and ribosome. Its function is as follows. The globular domain of the protein is located near the polypeptide exit tunnel on the outside of the subunit, while an extended beta-hairpin is found that lines the wall of the exit tunnel in the center of the 70S ribosome. This Aliivibrio fischeri (strain MJ11) (Vibrio fischeri) protein is Large ribosomal subunit protein uL22.